Consider the following 125-residue polypeptide: ATP synthase epsilon chain (125 aa).

Belongs to the ATPase epsilon chain family. In terms of assembly, F-type ATPases have 2 components, CF(1) - the catalytic core - and CF(0) - the membrane proton channel. CF(1) has five subunits: alpha(3), beta(3), gamma(1), delta(1), epsilon(1). CF(0) has three main subunits: a, b and c.

The protein localises to the cell inner membrane. Functionally, produces ATP from ADP in the presence of a proton gradient across the membrane. The protein is ATP synthase epsilon chain of Aliarcobacter butzleri (strain RM4018) (Arcobacter butzleri).